A 199-amino-acid polypeptide reads, in one-letter code: 3-isopropylmalate dehydratase small subunit (199 aa).

Belongs to the LeuD family. LeuD type 1 subfamily. Heterodimer of LeuC and LeuD.

It catalyses the reaction (2R,3S)-3-isopropylmalate = (2S)-2-isopropylmalate. It participates in amino-acid biosynthesis; L-leucine biosynthesis; L-leucine from 3-methyl-2-oxobutanoate: step 2/4. In terms of biological role, catalyzes the isomerization between 2-isopropylmalate and 3-isopropylmalate, via the formation of 2-isopropylmaleate. In Bacillus pumilus (strain SAFR-032), this protein is 3-isopropylmalate dehydratase small subunit.